Reading from the N-terminus, the 59-residue chain is MAKLKITLVKSLIGRKKEHIATANALGLRKIRATVEHEGTPQIKGMLKKIDYLLKVEEI.

It belongs to the universal ribosomal protein uL30 family. Part of the 50S ribosomal subunit.

The polypeptide is Large ribosomal subunit protein uL30 (Clostridium botulinum (strain Alaska E43 / Type E3)).